A 1253-amino-acid polypeptide reads, in one-letter code: Cytoplasmic FMR1-interacting protein 2 (1253 aa).

Lys1037 carries the N6-acetyllysine modification.

Belongs to the CYFIP family. In terms of assembly, component of the WAVE1 complex composed of ABI2, CYFIP2, BRK1, NCKAP1 and WASF1/WAVE1. Interacts with RAC1 (activated form) which causes the complex to dissociate, releasing activated WASF1. The complex can also be activated by NCK1. Interacts with SHANK3; the interaction mediates the association of SHANK3 with the WAVE1 complex. Interacts with FMR1; the interaction occurs in a RNA-dependent manner. Interacts with FXR1 and FXR2. Interacts with TMEM108 (via N-terminus); the interaction associates TMEM108 with the WAVE1 complex.

Its subcellular location is the cytoplasm. The protein resides in the nucleus. It is found in the perinuclear region. It localises to the synapse. The protein localises to the synaptosome. Functionally, involved in T-cell adhesion and p53-dependent induction of apoptosis. Does not bind RNA. As component of the WAVE1 complex, required for BDNF-NTRK2 endocytic trafficking and signaling from early endosomes. The chain is Cytoplasmic FMR1-interacting protein 2 from Pongo abelii (Sumatran orangutan).